The chain runs to 221 residues: Ubiquitin-conjugating enzyme E2 S (221 aa).

In terms of domain architecture, UBC core spans 11–157 (QVLRLVYKEV…AHLLTEIHAM (147 aa)). Catalysis depends on cysteine 95, which acts as the Glycyl thioester intermediate. A disordered region spans residues 158-221 (GGTSGAPQEP…TDKKRALRRL (64 aa)). The span at 193-206 (GTGTNNSNISNTNI) shows a compositional bias: low complexity. Residues 208–221 (AKKKTDKKRALRRL) are compositionally biased toward basic residues.

This sequence belongs to the ubiquitin-conjugating enzyme family.

The catalysed reaction is S-ubiquitinyl-[E1 ubiquitin-activating enzyme]-L-cysteine + [E2 ubiquitin-conjugating enzyme]-L-cysteine = [E1 ubiquitin-activating enzyme]-L-cysteine + S-ubiquitinyl-[E2 ubiquitin-conjugating enzyme]-L-cysteine.. The protein operates within protein modification; protein ubiquitination. In terms of biological role, catalyzes the covalent attachment of ubiquitin to other proteins. Acts as an essential factor of the anaphase promoting complex/cyclosome (APC/C), a cell cycle-regulated ubiquitin ligase that controls progression through mitosis. Acts by specifically elongating 'Lys-11'-linked polyubiquitin chains initiated by the E2 enzyme ube2c/ubch10 on APC/C substrates, enhancing the degradation of APC/C substrates by the proteasome and promoting mitotic exit. This Danio rerio (Zebrafish) protein is Ubiquitin-conjugating enzyme E2 S (ube2s).